Consider the following 665-residue polypeptide: Protein LOW PHOTOSYNTHETIC EFFICIENCY 1, chloroplastic (665 aa).

Residues 1–68 (MQALSILPLK…VSSNRKVLFL (68 aa)) constitute a chloroplast transit peptide. 13 PPR repeats span residues 145 to 179 (PLQV…KSES), 181 to 217 (GVIG…GIVP), 218 to 252 (NIVT…GFEP), 253 to 283 (NPIT…LREK), 309 to 344 (GRIC…GVRP), 345 to 375 (SREE…IRER), 380 to 414 (SLSV…GPEP), 422 to 456 (VVSH…GLKP), 457 to 491 (QRRH…GEKP), 492 to 526 (TVIS…GIEP), 527 to 561 (NLYA…GIEP), 562 to 596 (SVVT…NVEP), and 597 to 631 (NEIT…GLKL).

It belongs to the PPR family. P subfamily. Interacts with HCF173.

The protein resides in the plastid. The protein localises to the chloroplast thylakoid membrane. It is found in the chloroplast stroma. Required for light-regulated photosystem II (PSII) biogenesis and grana thylakoids formation by binding to the 5' UTR of PSII subunit mRNAs (e.g. psbJ, psbN and psbA) in a light-dependent manner through a redox-based mechanism, and facilitating the association of HCF173 with target mRNAs, which encodes PSII reaction center proteins (e.g. J, N and D1), thus regulating its expression by modulating ribosome loading. This chain is Protein LOW PHOTOSYNTHETIC EFFICIENCY 1, chloroplastic, found in Arabidopsis thaliana (Mouse-ear cress).